The primary structure comprises 78 residues: Broad mercury transporter MerE (78 aa).

A run of 2 helical transmembrane segments spans residues 19-39 (LWGA…AAVL) and 47-67 (FLGE…VLAV).

It localises to the cell inner membrane. Broad mercury transporter that mediates the transport of both CH(3)Hg(I) and Hg(II) across the membrane. The chain is Broad mercury transporter MerE from Shigella flexneri.